Reading from the N-terminus, the 207-residue chain is Protein ERP4 (207 aa).

Positions Met-1–Ser-21 are cleaved as a signal peptide. At Ser-22 to Thr-174 the chain is on the lumenal side. In terms of domain architecture, GOLD spans Lys-36–Lys-118. A helical transmembrane segment spans residues Trp-175 to Ile-195. The Cytoplasmic segment spans residues Gln-196 to Val-207.

It belongs to the EMP24/GP25L family.

Its subcellular location is the endoplasmic reticulum membrane. In terms of biological role, involved in vesicular protein trafficking. The polypeptide is Protein ERP4 (ERP4) (Saccharomyces cerevisiae (strain ATCC 204508 / S288c) (Baker's yeast)).